The sequence spans 237 residues: Large ribosomal subunit protein uL1 (237 aa).

It belongs to the universal ribosomal protein uL1 family. Part of the 50S ribosomal subunit.

In terms of biological role, binds directly to 23S rRNA. The L1 stalk is quite mobile in the ribosome, and is involved in E site tRNA release. Protein L1 is also a translational repressor protein, it controls the translation of the L11 operon by binding to its mRNA. This Synechococcus sp. (strain ATCC 27144 / PCC 6301 / SAUG 1402/1) (Anacystis nidulans) protein is Large ribosomal subunit protein uL1.